The sequence spans 408 residues: Epsin-3 (408 aa).

Ser2 carries the N-acetylserine modification. One can recognise an ENTH domain in the interval 24–157 (NVVFNYTEME…SDDNKIRAER (134 aa)). Positions 162 to 182 (ETAKKYKGVAGGSASADGSLN) are disordered. Phosphoserine is present on residues Ser196, Ser198, Ser203, Ser212, and Ser223. 2 disordered regions span residues 199–322 (ADFD…ITPA) and 338–408 (TAKA…LLSF). Positions 201 to 210 (FDSDNEDNED) are enriched in acidic residues. Residues 211–231 (GSFSQNGYNDNASRATSTPGQ) show a composition bias toward polar residues. Basic and acidic residues predominate over residues 249–263 (KPSKELIQEDEKKAD). The segment covering 264–273 (EEEDDDDEFS) has biased composition (acidic residues). Positions 279-317 (VPVTNPANSFNLLNTSPIEGMPATTSSMPFYNSSTTDQG) are enriched in polar residues. The span at 338–361 (TAKASAEAPSAPKASQAKAAASNP) shows a compositional bias: low complexity. Polar residues-rich tracts occupy residues 362–371 (VSNSTTALST) and 388–398 (QQEQNTNNNHT). Basic and acidic residues predominate over residues 399–408 (SSKEIDLLSF).

Interacts with the clathrin adapter GGA2, and VPS27.

The protein resides in the cytoplasm. The protein localises to the golgi apparatus. Its subcellular location is the trans-Golgi network membrane. It is found in the cytoplasmic vesicle. It localises to the clathrin-coated vesicle membrane. Functionally, involved in the recruitment of clathrin to the Golgi network and endosomes to form clathrin coated vesicles. Plays a role in the trafficking of clathrin between the Golgi network and endosomes. Binds to membranes enriched in phosphatidylinositol-3,5-bisphosphate (PtdIns(3,5)P2) and, in association with VPS27, is involved in protein sorting at the multivesicular body (MVB). This Saccharomyces cerevisiae (strain ATCC 204508 / S288c) (Baker's yeast) protein is Epsin-3 (ENT3).